Consider the following 419-residue polypeptide: Dynein regulatory complex protein 9 (419 aa).

Disordered regions lie at residues 1–47 (MEGE…SPEV) and 393–419 (SFKM…RGKK). Over residues 34–44 (EELEEEEEETS) the composition is skewed to acidic residues. The IQ domain occupies 371–400 (ELRSIVKLQAWWRGTVVRREIGSFKMPKKE).

It belongs to the DRC9 family. In terms of assembly, component of the nexin-dynein regulatory complex (N-DRC). Interacts (via IQ domain) with CALM when calcium levels are low. Does not interact with CALM in the presence of Ca(2+). Interacts with the HSP70 proteins HSPA1L and HSPA8. May form a complex with CAMK4 and HSP70.

The protein localises to the cytoplasm. Its subcellular location is the cell projection. It is found in the cilium. It localises to the flagellum. The protein resides in the cytoskeleton. The protein localises to the flagellum axoneme. Functionally, component of the nexin-dynein regulatory complex (N-DRC), a key regulator of ciliary/flagellar motility which maintains the alignment and integrity of the distal axoneme and regulates microtubule sliding in motile axonemes. Binds calmodulin when cellular Ca(2+) levels are low and thereby contributes to the regulation of calcium and calmodulin-dependent protein kinase IV (CAMK4) activity; contributes to the regulation of CAMK4 signaling cascades. Required for normal axoneme assembly in sperm flagella, normal sperm tail formation and for male fertility. This is Dynein regulatory complex protein 9 (Iqcg) from Rattus norvegicus (Rat).